Reading from the N-terminus, the 188-residue chain is MQNETKPLCGIDEAGRGPLAGALVMAGVVLKKPIDGLMDSKKLTEKRREALYTIVLENAEYHIVSFSAKEVDDLGISKCLQKGLQSIQNALDGCKYLFDGNSTFGVDNVSTMVKADDKVPEVSAASILAKVTRDREMIKMAEIYPEYGFEKHKGYGTKAHIEALMKYDRCEIHRRSFRVKGLDEPTLF.

One can recognise an RNase H type-2 domain in the interval 6 to 188; sequence KPLCGIDEAG…VKGLDEPTLF (183 aa). A divalent metal cation-binding residues include aspartate 12, glutamate 13, and aspartate 99.

This sequence belongs to the RNase HII family. Requires Mn(2+) as cofactor. The cofactor is Mg(2+).

The protein resides in the cytoplasm. The enzyme catalyses Endonucleolytic cleavage to 5'-phosphomonoester.. In terms of biological role, endonuclease that specifically degrades the RNA of RNA-DNA hybrids. The polypeptide is Ribonuclease HII (Sulfurovum sp. (strain NBC37-1)).